A 69-amino-acid polypeptide reads, in one-letter code: Cell division protein ZapB (69 aa).

A coiled-coil region spans residues Leu-6–Glu-68.

The protein belongs to the ZapB family. In terms of assembly, homodimer. The ends of the coiled-coil dimer bind to each other, forming polymers. Interacts with FtsZ.

The protein localises to the cytoplasm. Functionally, non-essential, abundant cell division factor that is required for proper Z-ring formation. It is recruited early to the divisome by direct interaction with FtsZ, stimulating Z-ring assembly and thereby promoting cell division earlier in the cell cycle. Its recruitment to the Z-ring requires functional FtsA or ZipA. This chain is Cell division protein ZapB, found in Tolumonas auensis (strain DSM 9187 / NBRC 110442 / TA 4).